The primary structure comprises 579 residues: 2-succinyl-5-enolpyruvyl-6-hydroxy-3-cyclohexene-1-carboxylate synthase (579 aa).

The protein belongs to the TPP enzyme family. MenD subfamily. In terms of assembly, homodimer. Mg(2+) is required as a cofactor. The cofactor is Mn(2+). Requires thiamine diphosphate as cofactor.

It catalyses the reaction isochorismate + 2-oxoglutarate + H(+) = 5-enolpyruvoyl-6-hydroxy-2-succinyl-cyclohex-3-ene-1-carboxylate + CO2. It functions in the pathway quinol/quinone metabolism; 1,4-dihydroxy-2-naphthoate biosynthesis; 1,4-dihydroxy-2-naphthoate from chorismate: step 2/7. Its pathway is quinol/quinone metabolism; menaquinone biosynthesis. In terms of biological role, catalyzes the thiamine diphosphate-dependent decarboxylation of 2-oxoglutarate and the subsequent addition of the resulting succinic semialdehyde-thiamine pyrophosphate anion to isochorismate to yield 2-succinyl-5-enolpyruvyl-6-hydroxy-3-cyclohexene-1-carboxylate (SEPHCHC). The sequence is that of 2-succinyl-5-enolpyruvyl-6-hydroxy-3-cyclohexene-1-carboxylate synthase from Oceanobacillus iheyensis (strain DSM 14371 / CIP 107618 / JCM 11309 / KCTC 3954 / HTE831).